We begin with the raw amino-acid sequence, 276 residues long: Large ribosomal subunit protein uL2 (276 aa).

Residues 221–276 form a disordered region; sequence RGSAMNPNDHPHGGGEGRAPIGRKSPMTPWGKKARGIKTRDRKKSSNELIIRRRTK. Basic residues predominate over residues 252–263; the sequence is KKARGIKTRDRK.

The protein belongs to the universal ribosomal protein uL2 family. As to quaternary structure, part of the 50S ribosomal subunit. Forms a bridge to the 30S subunit in the 70S ribosome.

Its function is as follows. One of the primary rRNA binding proteins. Required for association of the 30S and 50S subunits to form the 70S ribosome, for tRNA binding and peptide bond formation. It has been suggested to have peptidyltransferase activity; this is somewhat controversial. Makes several contacts with the 16S rRNA in the 70S ribosome. This is Large ribosomal subunit protein uL2 from Phytoplasma australiense.